The sequence spans 119 residues: Protein yippee-like 2 (119 aa).

The region spanning 19–116 (RTYSCIHCRA…IELAHMIKDN (98 aa)) is the Yippee domain. Positions 23, 26, 79, and 82 each coordinate Zn(2+).

The protein belongs to the yippee family. As to quaternary structure, may interact with FAM168B.

It localises to the nucleus. The protein localises to the nucleolus. This chain is Protein yippee-like 2 (YPEL2), found in Chlorocebus aethiops (Green monkey).